Here is a 53-residue protein sequence, read N- to C-terminus: Large ribosomal subunit protein eL40 (53 aa).

The protein belongs to the eukaryotic ribosomal protein eL40 family.

This chain is Large ribosomal subunit protein eL40, found in Pyrobaculum calidifontis (strain DSM 21063 / JCM 11548 / VA1).